The following is a 458-amino-acid chain: Zinc finger protein 19 (458 aa).

The KRAB domain occupies 14 to 85 (VTFEDVAVHF…EAQDDPPAER (72 aa)). 9 C2H2-type zinc fingers span residues 161-183 (FICE…QRIH), 189-211 (FECS…QRIH), 217-239 (YQCE…QRIH), 245-267 (YYCT…QRIH), 273-295 (YECN…QKIH), 301-323 (YECN…QRIH), 329-351 (YSCK…QRIH), 357-379 (FDCV…LRIH), and 385-407 (YVCD…QRIH). The C2H2-type 10; atypical zinc finger occupies 413 to 433 (YECSKYEKAFGTSSQLGHLEH).

It belongs to the krueppel C2H2-type zinc-finger protein family.

The protein resides in the nucleus. May be involved in transcriptional regulation. In Homo sapiens (Human), this protein is Zinc finger protein 19 (ZNF19).